A 141-amino-acid polypeptide reads, in one-letter code: Ribosomal RNA large subunit methyltransferase H (141 aa).

Residue G88 participates in S-adenosyl-L-methionine binding.

This sequence belongs to the RNA methyltransferase RlmH family. Homodimer.

It localises to the cytoplasm. The enzyme catalyses pseudouridine(1915) in 23S rRNA + S-adenosyl-L-methionine = N(3)-methylpseudouridine(1915) in 23S rRNA + S-adenosyl-L-homocysteine + H(+). Functionally, specifically methylates the pseudouridine at position 1915 (m3Psi1915) in 23S rRNA. The polypeptide is Ribosomal RNA large subunit methyltransferase H (Novosphingobium aromaticivorans (strain ATCC 700278 / DSM 12444 / CCUG 56034 / CIP 105152 / NBRC 16084 / F199)).